The following is a 616-amino-acid chain: Dihydroxy-acid dehydratase (616 aa).

Asp-81 lines the Mg(2+) pocket. [2Fe-2S] cluster is bound at residue Cys-122. Positions 123 and 124 each coordinate Mg(2+). Lys-124 carries the N6-carboxylysine modification. [2Fe-2S] cluster is bound at residue Cys-195. Mg(2+) is bound at residue Glu-491. Ser-517 serves as the catalytic Proton acceptor.

Belongs to the IlvD/Edd family. Homodimer. It depends on [2Fe-2S] cluster as a cofactor. Mg(2+) serves as cofactor.

It catalyses the reaction (2R)-2,3-dihydroxy-3-methylbutanoate = 3-methyl-2-oxobutanoate + H2O. It carries out the reaction (2R,3R)-2,3-dihydroxy-3-methylpentanoate = (S)-3-methyl-2-oxopentanoate + H2O. It participates in amino-acid biosynthesis; L-isoleucine biosynthesis; L-isoleucine from 2-oxobutanoate: step 3/4. Its pathway is amino-acid biosynthesis; L-valine biosynthesis; L-valine from pyruvate: step 3/4. Its function is as follows. Functions in the biosynthesis of branched-chain amino acids. Catalyzes the dehydration of (2R,3R)-2,3-dihydroxy-3-methylpentanoate (2,3-dihydroxy-3-methylvalerate) into 2-oxo-3-methylpentanoate (2-oxo-3-methylvalerate) and of (2R)-2,3-dihydroxy-3-methylbutanoate (2,3-dihydroxyisovalerate) into 2-oxo-3-methylbutanoate (2-oxoisovalerate), the penultimate precursor to L-isoleucine and L-valine, respectively. This Azoarcus sp. (strain BH72) protein is Dihydroxy-acid dehydratase.